Consider the following 113-residue polypeptide: Tubulin alpha chain (113 aa).

Glu52 serves as a coordination point for GTP. Glu52 is a binding site for Mg(2+).

This sequence belongs to the tubulin family. In terms of assembly, dimer of alpha and beta chains. A typical microtubule is a hollow water-filled tube with an outer diameter of 25 nm and an inner diameter of 15 nM. Alpha-beta heterodimers associate head-to-tail to form protofilaments running lengthwise along the microtubule wall with the beta-tubulin subunit facing the microtubule plus end conferring a structural polarity. Microtubules usually have 13 protofilaments but different protofilament numbers can be found in some organisms and specialized cells. The cofactor is Mg(2+).

It localises to the cytoplasm. Its subcellular location is the cytoskeleton. The catalysed reaction is GTP + H2O = GDP + phosphate + H(+). In terms of biological role, tubulin is the major constituent of microtubules, a cylinder consisting of laterally associated linear protofilaments composed of alpha- and beta-tubulin heterodimers. Microtubules grow by the addition of GTP-tubulin dimers to the microtubule end, where a stabilizing cap forms. Below the cap, tubulin dimers are in GDP-bound state, owing to GTPase activity of alpha-tubulin. This chain is Tubulin alpha chain (TUBA), found in Picea abies (Norway spruce).